The primary structure comprises 330 residues: Protoheme IX farnesyltransferase (330 aa).

9 consecutive transmembrane segments (helical) span residues 33–53, 54–74, 101–121, 126–146, 154–174, 180–200, 227–247, 250–270, and 308–328; these read VMTLVVFTAFAGLIAAPVDAD, PFLAFMSILCLAVGAGAAGAL, VSNAYGFGVVASILSVLLMAL, LAAGLLAFSIFFYAVIYTMIL, IVIGGAAGAFPPMIGWVAATG, AVILFMIIFLWTPPHSWALAL, ILLYSIVLVIFAGAPVLTGLG, VYGATSLGGGALFLLLAWRIF, and VLFAALIVEHAFGAYVAIPGV.

It belongs to the UbiA prenyltransferase family. Protoheme IX farnesyltransferase subfamily. Interacts with CtaA.

The protein resides in the cell inner membrane. The catalysed reaction is heme b + (2E,6E)-farnesyl diphosphate + H2O = Fe(II)-heme o + diphosphate. Its pathway is porphyrin-containing compound metabolism; heme O biosynthesis; heme O from protoheme: step 1/1. Its function is as follows. Converts heme B (protoheme IX) to heme O by substitution of the vinyl group on carbon 2 of heme B porphyrin ring with a hydroxyethyl farnesyl side group. The protein is Protoheme IX farnesyltransferase of Maricaulis maris (strain MCS10) (Caulobacter maris).